The sequence spans 257 residues: Cobalt transport protein CbiM (257 aa).

The signal sequence occupies residues 1–33; it reads MVKPTQAKRYASLGAIALLTTSLVVASPNPALA. The next 6 helical transmembrane spans lie at 39 to 59, 74 to 94, 117 to 137, 138 to 158, 171 to 191, and 214 to 234; these read GFLPLGWAVGWWLAFLPFLAW, SVLLVALAGAYAFVVSSLKIP, LMAVLGTLVLLFQSLLIAHGG, LTTLGANAFSMAVVGPWLAWL, AIALFAASFISNVGTYTLTSL, and LFAVTQIPLAISEGLLTVLVW.

Belongs to the CbiM family. Forms an energy-coupling factor (ECF) transporter complex composed of an ATP-binding protein (A component, CbiO), a transmembrane protein (T component, CbiQ) and 2 possible substrate-capture proteins (S components, CbiM and CbiN) of unknown stoichimetry.

Its subcellular location is the cell inner membrane. It participates in cofactor biosynthesis; adenosylcobalamin biosynthesis. Part of the energy-coupling factor (ECF) transporter complex CbiMNOQ involved in cobalt import. The polypeptide is Cobalt transport protein CbiM (Thermosynechococcus vestitus (strain NIES-2133 / IAM M-273 / BP-1)).